The chain runs to 263 residues: Indole-3-glycerol phosphate synthase (263 aa).

This sequence belongs to the TrpC family.

It carries out the reaction 1-(2-carboxyphenylamino)-1-deoxy-D-ribulose 5-phosphate + H(+) = (1S,2R)-1-C-(indol-3-yl)glycerol 3-phosphate + CO2 + H2O. It functions in the pathway amino-acid biosynthesis; L-tryptophan biosynthesis; L-tryptophan from chorismate: step 4/5. This Rhodospirillum rubrum (strain ATCC 11170 / ATH 1.1.1 / DSM 467 / LMG 4362 / NCIMB 8255 / S1) protein is Indole-3-glycerol phosphate synthase.